Consider the following 150-residue polypeptide: Large ribosomal subunit protein bL9 (150 aa).

This sequence belongs to the bacterial ribosomal protein bL9 family.

Functionally, binds to the 23S rRNA. In Mycoplasma genitalium (strain ATCC 33530 / DSM 19775 / NCTC 10195 / G37) (Mycoplasmoides genitalium), this protein is Large ribosomal subunit protein bL9.